Consider the following 318-residue polypeptide: Ubiquitin-like domain-containing CTD phosphatase 1 (318 aa).

One can recognise a Ubiquitin-like domain in the interval 3 to 81 (LSLIIKWGGQ…IMMMGTREES (79 aa)). Residues 133 to 294 (PREGKKLLVL…LKLSQYLKEI (162 aa)) enclose the FCP1 homology domain. Residues Asp-143, Asp-145, and Asp-253 each coordinate Mg(2+).

Requires Mg(2+) as cofactor.

The protein resides in the nucleus. The catalysed reaction is O-phospho-L-seryl-[protein] + H2O = L-seryl-[protein] + phosphate. It carries out the reaction O-phospho-L-threonyl-[protein] + H2O = L-threonyl-[protein] + phosphate. Its function is as follows. Dephosphorylates 26S nuclear proteasomes, thereby decreasing their proteolytic activity. Recruited to the 19S regulatory particle of the 26S proteasome where it dephosphorylates 19S component psmc2 which impairs psmc2 ATPase activity and disrupts 26S proteasome assembly. Has also been reported to stimulate the proteolytic activity of the 26S proteasome. The sequence is that of Ubiquitin-like domain-containing CTD phosphatase 1 (ublcp1) from Xenopus tropicalis (Western clawed frog).